We begin with the raw amino-acid sequence, 487 residues long: GTPase Der (487 aa).

EngA-type G domains lie at 3 to 166 (PVIA…PRDA) and 193 to 366 (IKIA…QSAV). GTP contacts are provided by residues 9–16 (GRPNVGKS), 56–60 (DTGGI), 118–121 (NKID), 199–206 (GRPNVGKS), 246–250 (DTAGV), and 311–314 (NKWD). The 85-residue stretch at 367–451 (TRWPTSRLTQ…PIRIEYKGGE (85 aa)) folds into the KH-like domain. Residues 448-461 (KGGENPYEGKKNTL) show a composition bias toward basic and acidic residues. The segment at 448 to 487 (KGGENPYEGKKNTLTDRQVNKKRRLMSHHKKAEKKRRDKR) is disordered. Over residues 467–487 (NKKRRLMSHHKKAEKKRRDKR) the composition is skewed to basic residues.

Belongs to the TRAFAC class TrmE-Era-EngA-EngB-Septin-like GTPase superfamily. EngA (Der) GTPase family. In terms of assembly, associates with the 50S ribosomal subunit.

GTPase that plays an essential role in the late steps of ribosome biogenesis. The polypeptide is GTPase Der (Pseudomonas putida (strain ATCC 700007 / DSM 6899 / JCM 31910 / BCRC 17059 / LMG 24140 / F1)).